The sequence spans 1202 residues: CHD3-type chromatin-remodeling factor CHR7 (1202 aa).

2 Chromo domains span residues glycine 45–leucine 109 and lysine 142–tyrosine 201. Positions arginine 237–aspartate 405 constitute a Helicase ATP-binding domain. Aspartate 250–threonine 257 is a binding site for ATP. Residues aspartate 356–histidine 359 carry the DEAH box motif. The 152-residue stretch at leucine 528–cysteine 679 folds into the Helicase C-terminal domain. The disordered stretch occupies residues threonine 838–glutamate 872. Residues glutamine 853–alanine 867 show a composition bias toward basic residues.

This sequence belongs to the SNF2/RAD54 helicase family.

It is found in the nucleus. Its function is as follows. Chromatin remodeling factor that represses the expression of embryonic trait genes upon and after seed germination and thus enables the developmental switch to post-germinative growth. This chain is CHD3-type chromatin-remodeling factor CHR7, found in Arabidopsis thaliana (Mouse-ear cress).